We begin with the raw amino-acid sequence, 69 residues long: uncharacterized protein (69 aa).

Transmembrane regions (helical) follow at residues 7 to 29 (LLSGLGLFLGVLAGLAGLILGSI) and 44 to 66 (ALQVLNFLLLFISTIAGGFLGLL).

It is found in the cell membrane. This is an uncharacterized protein from Archaeoglobus fulgidus (strain ATCC 49558 / DSM 4304 / JCM 9628 / NBRC 100126 / VC-16).